A 144-amino-acid chain; its full sequence is Transcription antitermination protein NusB (144 aa).

This sequence belongs to the NusB family.

Functionally, involved in transcription antitermination. Required for transcription of ribosomal RNA (rRNA) genes. Binds specifically to the boxA antiterminator sequence of the ribosomal RNA (rrn) operons. The chain is Transcription antitermination protein NusB from Dictyoglomus thermophilum (strain ATCC 35947 / DSM 3960 / H-6-12).